We begin with the raw amino-acid sequence, 200 residues long: 7-methyl-GTP pyrophosphatase (200 aa).

Residue Asp75 is the Proton acceptor of the active site.

This sequence belongs to the Maf family. YceF subfamily. A divalent metal cation is required as a cofactor.

The protein resides in the cytoplasm. It catalyses the reaction N(7)-methyl-GTP + H2O = N(7)-methyl-GMP + diphosphate + H(+). Its function is as follows. Nucleoside triphosphate pyrophosphatase that hydrolyzes 7-methyl-GTP (m(7)GTP). May have a dual role in cell division arrest and in preventing the incorporation of modified nucleotides into cellular nucleic acids. In Hydrogenovibrio crunogenus (strain DSM 25203 / XCL-2) (Thiomicrospira crunogena), this protein is 7-methyl-GTP pyrophosphatase.